The sequence spans 99 residues: PE family protein PE13 (99 aa).

Positions 1–93 (MSFVMAYPEM…ASSYAATEVA (93 aa)) constitute a PE domain.

It belongs to the mycobacterial PE family.

It is found in the secreted. Its subcellular location is the cell wall. In terms of biological role, may play a pivotal role in the interaction between M.tuberculosis and host. Can enhance the survival within macrophages under stress conditions such as H(2)O(2), SDS and low pH. Increases the production of IL-6 and IL-1beta from macrophages, and decreases the secretion of suppressor of cytokine signaling 3 (SOCS-3). These changes probably involve the p38-ERK-NF-kappa-B signaling pathway. Also precipitates the macrophage death. This Mycobacterium tuberculosis (strain ATCC 25618 / H37Rv) protein is PE family protein PE13.